Consider the following 91-residue polypeptide: DNA-directed RNA polymerase subunit omega (91 aa).

Belongs to the RNA polymerase subunit omega family. The RNAP catalytic core consists of 2 alpha, 1 beta, 1 beta' and 1 omega subunit. When a sigma factor is associated with the core the holoenzyme is formed, which can initiate transcription.

The catalysed reaction is RNA(n) + a ribonucleoside 5'-triphosphate = RNA(n+1) + diphosphate. Promotes RNA polymerase assembly. Latches the N- and C-terminal regions of the beta' subunit thereby facilitating its interaction with the beta and alpha subunits. In Proteus mirabilis (strain HI4320), this protein is DNA-directed RNA polymerase subunit omega.